Consider the following 395-residue polypeptide: MKKVVVGLSGGVDSSVSAYLLKEQGYEVIGLFMKNWHDDSVTISDECPWLDDSNDAMMVADKLGIPFQTVDLSEQYKERIVDYMFNEYEKGRTPNPDVLCNREIKFDVFMKIALSLGADYVATGHYCRKAEFEKDGEPIYQLLSGEDNNKDQSYFLCQLTQEQLSKTLFPIGELQKSEVRKIAAEQNLVTAEKKDSQGLCFIGKVRLPDFLQQKLKSKEGVIVEVPAGNDSYLEEDINFKSKIDQLQHLSKKFNYQLTDGKVVGKHQGAHYFTKGQRKGLAVGGTPEPLFVIDTDVIENVIYTGQGKDHPGIYRQGLFIAQDEVHWVRRDLAIDSDEELRIKARIRYRQPLQDATLHQTENGMYVIFDQPQASITEGQFVAWYQNGELLGSGVIS.

ATP is bound by residues 7-14 (GLSGGVDS) and methionine 33. The segment at 95–97 (NPD) is interaction with target base in tRNA. Cysteine 100 (nucleophile) is an active-site residue. Cysteine 100 and cysteine 200 are disulfide-bonded. Glycine 124 contacts ATP. An interaction with tRNA region spans residues 150-152 (KDQ). Cysteine 200 acts as the Cysteine persulfide intermediate in catalysis. The interval 346–347 (RY) is interaction with tRNA.

The protein belongs to the MnmA/TRMU family.

Its subcellular location is the cytoplasm. It carries out the reaction S-sulfanyl-L-cysteinyl-[protein] + uridine(34) in tRNA + AH2 + ATP = 2-thiouridine(34) in tRNA + L-cysteinyl-[protein] + A + AMP + diphosphate + H(+). Catalyzes the 2-thiolation of uridine at the wobble position (U34) of tRNA, leading to the formation of s(2)U34. The chain is tRNA-specific 2-thiouridylase MnmA from Christiangramia forsetii (strain DSM 17595 / CGMCC 1.15422 / KT0803) (Gramella forsetii).